The chain runs to 705 residues: Methionine--tRNA ligase (705 aa).

The 'HIGH' region signature appears at Pro-17–His-27. Residues Cys-149, Cys-152, Cys-162, and Cys-165 each contribute to the Zn(2+) site. The 'KMSKS' region signature appears at Lys-347–Ser-351. Lys-350 contributes to the ATP binding site. The tRNA-binding domain maps to Glu-604 to Gln-705.

It belongs to the class-I aminoacyl-tRNA synthetase family. MetG type 1 subfamily. Homodimer. It depends on Zn(2+) as a cofactor.

It localises to the cytoplasm. It catalyses the reaction tRNA(Met) + L-methionine + ATP = L-methionyl-tRNA(Met) + AMP + diphosphate. Its function is as follows. Is required not only for elongation of protein synthesis but also for the initiation of all mRNA translation through initiator tRNA(fMet) aminoacylation. The sequence is that of Methionine--tRNA ligase from Chlorobium chlorochromatii (strain CaD3).